A 786-amino-acid chain; its full sequence is MMGTKHRNSHVNGSIKSSSSLRSSSKSFQAKMDLMSERLYDVVKSGSMVKRAQNKKRFTPVNYKHRWFELTKRTFSYFDVENVERRRERGRIHLKGVRLVEEATVSGEGGDPFAPDGYPFQVGYCEISASANSHQLENGNGGGSGVGIEGQQSGRAVPQYTLYVIANSEKERSEWIRAIRQVCEDSNTPKSYRYHPGLWSGKKWSCCKGLSRTTFGCRAAAHWREANNNPSNGSSPAQNSTRSISPNSSTTNSQFSLQHNSSGSLGGGVGGGLGGGGSLGLGGGGGGGGSCTPTSLQPQSSLTTFKQSPTLLNGNGTLLDANMPGGIPTPGTPNSKAKDNSHFVKLVVALYPFKAIEGGDLSLEKNAEYEVIDDSQEHWWKVKDALGNVGYIPSNYVKPKALLGLERYEWYVGDMSRQRAESLLKQGDKEGCFVVRKSSTKGLYTLSLHTKVPQSHVKHYHIKQNARCEYYLSEKHCCETIPDLINYHRHNSGGLACRLKSSPCDRPVPPTAGLSHDKWEIHPMELMLMEELGSGQFGVVRRGKWRGSIDTAVKMMKEGTMSEDDFIEEAKVMTKLQHPNLVQLYGVCSKHRPIYIVTEYMKHGSLLNYLRRHEKTLIGNMGLLLDMCIQVSKGMTYLERHNYIHRDLAARNCLVGSENVVKVADFGLARYVLDDQYTSSGGTKFPIKWAPPEVLNYTRFSSKSDVWAYGVLMWEIFTCGKMPYGRLKNTEVVERVQRGIILEKPKSCAKEIYDVMKLCWSHGPEERPAFRVLMDQLALVAQTLTD.

The interval 1 to 23 (MMGTKHRNSHVNGSIKSSSSLRS) is disordered. Over residues 14–23 (SIKSSSSLRS) the composition is skewed to low complexity. The PH domain occupies 41–184 (DVVKSGSMVK…WIRAIRQVCE (144 aa)). Residues 187-223 (NTPKSYRYHPGLWSGKKWSCCKGLSRTTFGCRAAAHW) form a Btk-type zinc finger. Zn(2+) contacts are provided by H195, C206, C207, and C217. Low complexity predominate over residues 226 to 240 (ANNNPSNGSSPAQNS). Residues 226 to 301 (ANNNPSNGSS…TPTSLQPQSS (76 aa)) form a disordered region. Over residues 241 to 260 (TRSISPNSSTTNSQFSLQHN) the composition is skewed to polar residues. Residues 264-290 (SLGGGVGGGLGGGGSLGLGGGGGGGGS) show a composition bias toward gly residues. The span at 291-301 (CTPTSLQPQSS) shows a compositional bias: polar residues. An SH3 domain is found at 342–402 (HFVKLVVALY…PSNYVKPKAL (61 aa)). Positions 410–503 (WYVGDMSRQR…GLACRLKSSP (94 aa)) constitute an SH2 domain. The Protein kinase domain maps to 526–779 (LMLMEELGSG…FRVLMDQLAL (254 aa)). ATP contacts are provided by residues 532-540 (LGSGQFGVV) and K554. D647 (proton acceptor) is an active-site residue. A Phosphotyrosine; by autocatalysis modification is found at Y677.

The protein belongs to the protein kinase superfamily. Tyr protein kinase family. TEC subfamily. It depends on Zn(2+) as a cofactor. Ring canals in the egg chambers and imaginal disks of third-instar larvae.

The enzyme catalyses L-tyrosyl-[protein] + ATP = O-phospho-L-tyrosyl-[protein] + ADP + H(+). In terms of biological role, required for proper ring canal development. Also required for the development of male genitalia and for adult survival. This chain is Tyrosine-protein kinase Btk, found in Drosophila melanogaster (Fruit fly).